The primary structure comprises 859 residues: Valine--tRNA ligase (859 aa).

The short motif at 46–56 (PTVSGQLHIGH) is the 'HIGH' region element. Residues 583-587 (KMSKS) carry the 'KMSKS' region motif. Residue lysine 586 coordinates ATP.

Belongs to the class-I aminoacyl-tRNA synthetase family. ValS type 2 subfamily. In terms of assembly, monomer.

It is found in the cytoplasm. The catalysed reaction is tRNA(Val) + L-valine + ATP = L-valyl-tRNA(Val) + AMP + diphosphate. Functionally, catalyzes the attachment of valine to tRNA(Val). As ValRS can inadvertently accommodate and process structurally similar amino acids such as threonine, to avoid such errors, it has a 'posttransfer' editing activity that hydrolyzes mischarged Thr-tRNA(Val) in a tRNA-dependent manner. This chain is Valine--tRNA ligase, found in Rickettsia felis (strain ATCC VR-1525 / URRWXCal2) (Rickettsia azadi).